The following is a 99-amino-acid chain: UPF0213 protein RBAM_000440 (99 aa).

Positions asparagine 4–glutamine 79 constitute a GIY-YIG domain.

It belongs to the UPF0213 family.

This is UPF0213 protein RBAM_000440 from Bacillus velezensis (strain DSM 23117 / BGSC 10A6 / LMG 26770 / FZB42) (Bacillus amyloliquefaciens subsp. plantarum).